The chain runs to 420 residues: UDP-N-acetylglucosamine 1-carboxyvinyltransferase (420 aa).

22-23 contributes to the phosphoenolpyruvate binding site; sequence KN. Arginine 92 is a binding site for UDP-N-acetyl-alpha-D-glucosamine. The Proton donor role is filled by cysteine 116. Residue cysteine 116 is modified to 2-(S-cysteinyl)pyruvic acid O-phosphothioketal. Residues 121-125, aspartate 304, and isoleucine 326 contribute to the UDP-N-acetyl-alpha-D-glucosamine site; that span reads RPVDQ.

This sequence belongs to the EPSP synthase family. MurA subfamily.

It localises to the cytoplasm. The catalysed reaction is phosphoenolpyruvate + UDP-N-acetyl-alpha-D-glucosamine = UDP-N-acetyl-3-O-(1-carboxyvinyl)-alpha-D-glucosamine + phosphate. It participates in cell wall biogenesis; peptidoglycan biosynthesis. In terms of biological role, cell wall formation. Adds enolpyruvyl to UDP-N-acetylglucosamine. The sequence is that of UDP-N-acetylglucosamine 1-carboxyvinyltransferase from Paraburkholderia phytofirmans (strain DSM 17436 / LMG 22146 / PsJN) (Burkholderia phytofirmans).